The following is a 504-amino-acid chain: Galactan beta-1,4-galactosyltransferase GALS3 (504 aa).

Residues 30 to 50 (LTFMALLVLCTLATLLPFIPS) form a helical membrane-spanning segment. The region spanning 242 to 456 (DYLYCGSSLY…YHGSISQRRE (215 aa)) is the GT92 domain.

The protein belongs to the glycosyltransferase 92 family. In terms of tissue distribution, expressed in root caps, mature leaves, top of the stems and seeds.

It is found in the golgi apparatus membrane. Its function is as follows. Involved in the biosynthesis of beta-1,4-galactan. Beta-1,4-galactans are abundant polysaccharides in plant cell walls and are found as side-chain of rhamnogalacturonan I, which is a major component of pectin. The sequence is that of Galactan beta-1,4-galactosyltransferase GALS3 from Arabidopsis thaliana (Mouse-ear cress).